We begin with the raw amino-acid sequence, 235 residues long: MYALSEKGERIRAMFGSIAPRYDLLNRLLSLGIDRRWRRFAVKKIGLNGSGRVLDVATGTGDVALEIASQTPASVSIVGIDFTPEMIELGRVKVKDSRHCGRITLQVAPCEEIPFDDGSFDAATISFGIRNVVDRIKGLAEMHRVLKNDGKIVILEFSTPTLPVFKDLYHFYFLKVLPKIGGAFSRFSAYQYLPDSVLEFPSREVFKGMMTQVGFKDVRHFDLTGGIATVYVGTK.

S-adenosyl-L-methionine is bound by residues Thr60, Asp81, and Ser126.

The protein belongs to the class I-like SAM-binding methyltransferase superfamily. MenG/UbiE family.

The catalysed reaction is a 2-demethylmenaquinol + S-adenosyl-L-methionine = a menaquinol + S-adenosyl-L-homocysteine + H(+). The enzyme catalyses a 2-methoxy-6-(all-trans-polyprenyl)benzene-1,4-diol + S-adenosyl-L-methionine = a 5-methoxy-2-methyl-3-(all-trans-polyprenyl)benzene-1,4-diol + S-adenosyl-L-homocysteine + H(+). Its pathway is quinol/quinone metabolism; menaquinone biosynthesis; menaquinol from 1,4-dihydroxy-2-naphthoate: step 2/2. It functions in the pathway cofactor biosynthesis; ubiquinone biosynthesis. Methyltransferase required for the conversion of demethylmenaquinol (DMKH2) to menaquinol (MKH2) and the conversion of 2-polyprenyl-6-methoxy-1,4-benzoquinol (DDMQH2) to 2-polyprenyl-3-methyl-6-methoxy-1,4-benzoquinol (DMQH2). This Citrifermentans bemidjiense (strain ATCC BAA-1014 / DSM 16622 / JCM 12645 / Bem) (Geobacter bemidjiensis) protein is Ubiquinone/menaquinone biosynthesis C-methyltransferase UbiE.